A 512-amino-acid chain; its full sequence is ATP synthase subunit alpha (512 aa).

169–176 is an ATP binding site; the sequence is GDRQTGKT.

This sequence belongs to the ATPase alpha/beta chains family. As to quaternary structure, F-type ATPases have 2 components, CF(1) - the catalytic core - and CF(0) - the membrane proton channel. CF(1) has five subunits: alpha(3), beta(3), gamma(1), delta(1), epsilon(1). CF(0) has three main subunits: a(1), b(2) and c(9-12). The alpha and beta chains form an alternating ring which encloses part of the gamma chain. CF(1) is attached to CF(0) by a central stalk formed by the gamma and epsilon chains, while a peripheral stalk is formed by the delta and b chains.

Its subcellular location is the cell inner membrane. The catalysed reaction is ATP + H2O + 4 H(+)(in) = ADP + phosphate + 5 H(+)(out). Its function is as follows. Produces ATP from ADP in the presence of a proton gradient across the membrane. The alpha chain is a regulatory subunit. In Dechloromonas aromatica (strain RCB), this protein is ATP synthase subunit alpha.